The primary structure comprises 153 residues: Endoribonuclease YbeY (153 aa).

Zn(2+) contacts are provided by histidine 118, histidine 122, and histidine 128.

Belongs to the endoribonuclease YbeY family. Zn(2+) serves as cofactor.

The protein resides in the cytoplasm. Functionally, single strand-specific metallo-endoribonuclease involved in late-stage 70S ribosome quality control and in maturation of the 3' terminus of the 16S rRNA. In Staphylococcus carnosus (strain TM300), this protein is Endoribonuclease YbeY.